Here is a 32-residue protein sequence, read N- to C-terminus: uncharacterized protein (32 aa).

Residues 3–23 traverse the membrane as a helical segment; that stretch reads IGIIFPVVIFITAVVFLAWFF.

Its subcellular location is the cell inner membrane. This is an uncharacterized protein from Escherichia coli (strain K12).